A 652-amino-acid chain; its full sequence is Leucine aminopeptidase 2 (652 aa).

Residues 165–167 (QLE) and 293–298 (PYGGME) contribute to the a peptide site. H322 is a binding site for Zn(2+). E323 functions as the Proton acceptor in the catalytic mechanism. Zn(2+) is bound by residues H326 and E345. The active-site Proton donor is the Y411.

The protein belongs to the peptidase M1 family. It depends on Zn(2+) as a cofactor.

It is found in the cytoplasm. Its subcellular location is the nucleus. It catalyses the reaction an epoxide + H2O = an ethanediol. Functionally, aminopeptidase that preferentially cleaves di- and tripeptides. Also has low epoxide hydrolase activity (in vitro). Can hydrolyze the epoxide leukotriene LTA(4) but it forms preferentially 5,6-dihydroxy-7,9,11,14-eicosatetraenoic acid rather than the cytokine leukotriene B(4) as the product compared to the homologous mammalian enzyme (in vitro). In Candida glabrata (strain ATCC 2001 / BCRC 20586 / JCM 3761 / NBRC 0622 / NRRL Y-65 / CBS 138) (Yeast), this protein is Leucine aminopeptidase 2.